The sequence spans 484 residues: Glutamate--tRNA ligase (484 aa).

Positions 10-20 match the 'HIGH' region motif; it reads PSPTGYLHVGG. The 'KMSKS' region motif lies at 252–256; it reads KLSKR. Position 255 (K255) interacts with ATP.

This sequence belongs to the class-I aminoacyl-tRNA synthetase family. Glutamate--tRNA ligase type 1 subfamily. As to quaternary structure, monomer.

Its subcellular location is the cytoplasm. The catalysed reaction is tRNA(Glu) + L-glutamate + ATP = L-glutamyl-tRNA(Glu) + AMP + diphosphate. Functionally, catalyzes the attachment of glutamate to tRNA(Glu) in a two-step reaction: glutamate is first activated by ATP to form Glu-AMP and then transferred to the acceptor end of tRNA(Glu). The protein is Glutamate--tRNA ligase of Mycoplasma genitalium (strain ATCC 33530 / DSM 19775 / NCTC 10195 / G37) (Mycoplasmoides genitalium).